The following is a 333-amino-acid chain: MLVLGIESSCDETGVAVYDSESGLLSHALHSQIATHRVHGGVVPELASRDHVNYLVPLVDEVLTKAQIRKNQLDGIAYTAGPGLIGALLVGSCFAKSLAYALNIPALAIHHLEAHLLAAKMETPSLDFPFIALLVSGGHCQLIEVNNIGEYRLLGDTLDDAVGEAFDKTAKLMGIPYPGGAVLANLADQCLSTPYQFPRPMTDRPGLDFSFSGLKTHALNTWNQSEKKESDRSEIAKAFQQAVVETLIIKCKRAIKESQSKRLVVAGGVGANKALRSALQKWIKDIKGEVYFPALEYCTDNGAMVAYAGCLRMMRGESDGGWGVMVKPRWPLA.

Residues His111 and His115 each contribute to the Fe cation site. Residues 134–138, Asp167, Gly180, and Asn272 contribute to the substrate site; that span reads LVSGG. Asp300 serves as a coordination point for Fe cation.

This sequence belongs to the KAE1 / TsaD family. Fe(2+) serves as cofactor.

The protein localises to the cytoplasm. It catalyses the reaction L-threonylcarbamoyladenylate + adenosine(37) in tRNA = N(6)-L-threonylcarbamoyladenosine(37) in tRNA + AMP + H(+). Its function is as follows. Required for the formation of a threonylcarbamoyl group on adenosine at position 37 (t(6)A37) in tRNAs that read codons beginning with adenine. Is involved in the transfer of the threonylcarbamoyl moiety of threonylcarbamoyl-AMP (TC-AMP) to the N6 group of A37, together with TsaE and TsaB. TsaD likely plays a direct catalytic role in this reaction. In Legionella pneumophila (strain Paris), this protein is tRNA N6-adenosine threonylcarbamoyltransferase.